Consider the following 132-residue polypeptide: UPF0332 protein TM_1000 (132 aa).

This sequence belongs to the UPF0332 family.

This Thermotoga maritima (strain ATCC 43589 / DSM 3109 / JCM 10099 / NBRC 100826 / MSB8) protein is UPF0332 protein TM_1000.